A 431-amino-acid polypeptide reads, in one-letter code: Serine--tRNA ligase (431 aa).

236–238 is an L-serine binding site; sequence TAE. 267–269 is an ATP binding site; sequence RSE. Glu290 lines the L-serine pocket. 354 to 357 is an ATP binding site; sequence EISS. L-serine is bound at residue Ser389.

It belongs to the class-II aminoacyl-tRNA synthetase family. Type-1 seryl-tRNA synthetase subfamily. In terms of assembly, homodimer. The tRNA molecule binds across the dimer.

It localises to the cytoplasm. The catalysed reaction is tRNA(Ser) + L-serine + ATP = L-seryl-tRNA(Ser) + AMP + diphosphate + H(+). It catalyses the reaction tRNA(Sec) + L-serine + ATP = L-seryl-tRNA(Sec) + AMP + diphosphate + H(+). Its pathway is aminoacyl-tRNA biosynthesis; selenocysteinyl-tRNA(Sec) biosynthesis; L-seryl-tRNA(Sec) from L-serine and tRNA(Sec): step 1/1. Catalyzes the attachment of serine to tRNA(Ser). Is also able to aminoacylate tRNA(Sec) with serine, to form the misacylated tRNA L-seryl-tRNA(Sec), which will be further converted into selenocysteinyl-tRNA(Sec). This Herminiimonas arsenicoxydans protein is Serine--tRNA ligase.